Here is a 170-residue protein sequence, read N- to C-terminus: RxLR effector protein CRE16 (170 aa).

An N-terminal signal peptide occupies residues methionine 1–alanine 23. The short motif at arginine 47–arginine 68 is the RxLR-dEER element.

This sequence belongs to the RxLR effector family.

It is found in the secreted. The protein localises to the host cytoplasm. Its subcellular location is the host nucleus. In terms of biological role, effector that is involved in host plant infection. Contributes to virulence during the early infection stage, by inhibiting plant defense responses induced by both PAMP-triggered immunity (PTI) and effector-triggered immunity (ETI). The chain is RxLR effector protein CRE16 from Phytophthora infestans (strain T30-4) (Potato late blight agent).